Here is a 463-residue protein sequence, read N- to C-terminus: Annexin A7 (463 aa).

The span at methionine 1–proline 18 shows a compositional bias: pro residues. Disordered regions lie at residues methionine 1–tyrosine 34 and serine 77–glycine 149. The repeat-rich region stretch occupies residues methionine 1–proline 143. The tract at residues glycine 5–alanine 20 is 3 X 5 AA tandem repeats of G-Y-P-P-X. Gly residues predominate over residues glycine 86–phenylalanine 99. Annexin repeat units lie at residues phenylalanine 160–methionine 231, proline 232–glutamine 303, glutamine 315–glutamine 387, and asparagine 391–glycine 462. The residue at position 208 (lysine 208) is an N6-acetyllysine.

The protein belongs to the annexin family. As to quaternary structure, interacts with PDCD6.

Calcium/phospholipid-binding protein which promotes membrane fusion and is involved in exocytosis. The protein is Annexin A7 (Anxa7) of Mus musculus (Mouse).